We begin with the raw amino-acid sequence, 262 residues long: Acyl-[acyl-carrier-protein]--UDP-N-acetylglucosamine O-acyltransferase (262 aa).

It belongs to the transferase hexapeptide repeat family. LpxA subfamily. Homotrimer.

The protein resides in the cytoplasm. It catalyses the reaction a (3R)-hydroxyacyl-[ACP] + UDP-N-acetyl-alpha-D-glucosamine = a UDP-3-O-[(3R)-3-hydroxyacyl]-N-acetyl-alpha-D-glucosamine + holo-[ACP]. It participates in glycolipid biosynthesis; lipid IV(A) biosynthesis; lipid IV(A) from (3R)-3-hydroxytetradecanoyl-[acyl-carrier-protein] and UDP-N-acetyl-alpha-D-glucosamine: step 1/6. Its function is as follows. Involved in the biosynthesis of lipid A, a phosphorylated glycolipid that anchors the lipopolysaccharide to the outer membrane of the cell. In Cronobacter sakazakii (strain ATCC BAA-894) (Enterobacter sakazakii), this protein is Acyl-[acyl-carrier-protein]--UDP-N-acetylglucosamine O-acyltransferase.